The primary structure comprises 291 residues: 4-hydroxy-tetrahydrodipicolinate synthase (291 aa).

Pyruvate is bound at residue T47. Y134 functions as the Proton donor/acceptor in the catalytic mechanism. K162 functions as the Schiff-base intermediate with substrate in the catalytic mechanism. I205 contributes to the pyruvate binding site.

The protein belongs to the DapA family. Homotetramer; dimer of dimers.

It localises to the cytoplasm. The enzyme catalyses L-aspartate 4-semialdehyde + pyruvate = (2S,4S)-4-hydroxy-2,3,4,5-tetrahydrodipicolinate + H2O + H(+). Its pathway is amino-acid biosynthesis; L-lysine biosynthesis via DAP pathway; (S)-tetrahydrodipicolinate from L-aspartate: step 3/4. In terms of biological role, catalyzes the condensation of (S)-aspartate-beta-semialdehyde [(S)-ASA] and pyruvate to 4-hydroxy-tetrahydrodipicolinate (HTPA). This chain is 4-hydroxy-tetrahydrodipicolinate synthase, found in Methanoculleus marisnigri (strain ATCC 35101 / DSM 1498 / JR1).